Reading from the N-terminus, the 325-residue chain is 4-hydroxy-3-methylbut-2-enyl diphosphate reductase (325 aa).

A [4Fe-4S] cluster-binding site is contributed by Cys25. (2E)-4-hydroxy-3-methylbut-2-enyl diphosphate-binding residues include His54 and His87. Dimethylallyl diphosphate-binding residues include His54 and His87. Residues His54 and His87 each coordinate isopentenyl diphosphate. Cys109 contacts [4Fe-4S] cluster. His137 contacts (2E)-4-hydroxy-3-methylbut-2-enyl diphosphate. Dimethylallyl diphosphate is bound at residue His137. His137 is a binding site for isopentenyl diphosphate. Glu139 (proton donor) is an active-site residue. Thr179 contacts (2E)-4-hydroxy-3-methylbut-2-enyl diphosphate. Cys209 is a [4Fe-4S] cluster binding site. (2E)-4-hydroxy-3-methylbut-2-enyl diphosphate is bound by residues Ser237, Ser238, Asn239, and Ser282. Ser237, Ser238, Asn239, and Ser282 together coordinate dimethylallyl diphosphate. Isopentenyl diphosphate contacts are provided by Ser237, Ser238, Asn239, and Ser282.

This sequence belongs to the IspH family. The cofactor is [4Fe-4S] cluster.

It carries out the reaction isopentenyl diphosphate + 2 oxidized [2Fe-2S]-[ferredoxin] + H2O = (2E)-4-hydroxy-3-methylbut-2-enyl diphosphate + 2 reduced [2Fe-2S]-[ferredoxin] + 2 H(+). The enzyme catalyses dimethylallyl diphosphate + 2 oxidized [2Fe-2S]-[ferredoxin] + H2O = (2E)-4-hydroxy-3-methylbut-2-enyl diphosphate + 2 reduced [2Fe-2S]-[ferredoxin] + 2 H(+). Its pathway is isoprenoid biosynthesis; dimethylallyl diphosphate biosynthesis; dimethylallyl diphosphate from (2E)-4-hydroxy-3-methylbutenyl diphosphate: step 1/1. It functions in the pathway isoprenoid biosynthesis; isopentenyl diphosphate biosynthesis via DXP pathway; isopentenyl diphosphate from 1-deoxy-D-xylulose 5-phosphate: step 6/6. In terms of biological role, catalyzes the conversion of 1-hydroxy-2-methyl-2-(E)-butenyl 4-diphosphate (HMBPP) into a mixture of isopentenyl diphosphate (IPP) and dimethylallyl diphosphate (DMAPP). Acts in the terminal step of the DOXP/MEP pathway for isoprenoid precursor biosynthesis. The protein is 4-hydroxy-3-methylbut-2-enyl diphosphate reductase of Corynebacterium glutamicum (strain ATCC 13032 / DSM 20300 / JCM 1318 / BCRC 11384 / CCUG 27702 / LMG 3730 / NBRC 12168 / NCIMB 10025 / NRRL B-2784 / 534).